Consider the following 513-residue polypeptide: MGAAAKLAFAVFLISCSSGAILGRSETQECLFFNANWERDRTNQTGVEPCYGDKDKRRHCFATWKNISGSIEIVKQGCWLDDINCYDRTDCIEKKDSPEVYFCCCEGNMCNEKFSYFPEMEVTQPTSNPVTPKPPYYNILLYSLVPLMLIAGIVICAFWVYRHHMMAYPPVLVPTQDPGPPPPSPLLGLKPLQLLEVKARGRFGCVWKAQLLNEYVAVKIFPIQDKQSWQNEYEVYSLPGMKHENILQFIGAEKRGTSVDVDLWLITAFHEKGSLSDFLKANVVSWNELCHIAETMARGLAYLHEDIPGLKDGHKPAISHRDIKSKNVLLKNNLTACIADFGLALKFEAGKSGGDTHGQVGTRRYMAPEVLEGAINFQRDAFLRIDMYAMGLVLWELASRCTAADGPVDEYMLPFEEEIGQHPSLEDMQEVVVHKKKRPVLRDYWQKHAGMAMLCETIEECWDHDAEARLSAGCLGERITQMQRLTNIITTEDIVTVVTMVTNVDFPPKESSL.

Positions 1-19 (MGAAAKLAFAVFLISCSSG) are cleaved as a signal peptide. Topologically, residues 20-135 (AILGRSETQE…TSNPVTPKPP (116 aa)) are extracellular. Disulfide bonds link C30–C60, C50–C78, C85–C104, C91–C103, and C105–C110. 2 N-linked (GlcNAc...) asparagine glycosylation sites follow: N43 and N66. Residues 136–161 (YYNILLYSLVPLMLIAGIVICAFWVY) traverse the membrane as a helical segment. The Cytoplasmic segment spans residues 162 to 513 (RHHMMAYPPV…VDFPPKESSL (352 aa)). The 294-residue stretch at 192–485 (LQLLEVKARG…GERITQMQRL (294 aa)) folds into the Protein kinase domain. Residues 198–206 (KARGRFGCV) and K219 each bind ATP. Catalysis depends on D322, which acts as the Proton acceptor.

This sequence belongs to the protein kinase superfamily. TKL Ser/Thr protein kinase family. TGFB receptor subfamily. As to quaternary structure, part of a complex consisting of MAGI2/ARIP1, ACVR2A, ACVR1B and SMAD3. Interacts with MAGI2/ARIP1. Interacts with type I receptor ACVR1. Interacts with BMP7. Interacts with TSC22D1/TSC-22. Interacts with activin A/INHBA. Mg(2+) is required as a cofactor. The cofactor is Mn(2+).

Its subcellular location is the cell membrane. The catalysed reaction is L-threonyl-[receptor-protein] + ATP = O-phospho-L-threonyl-[receptor-protein] + ADP + H(+). It carries out the reaction L-seryl-[receptor-protein] + ATP = O-phospho-L-seryl-[receptor-protein] + ADP + H(+). In terms of biological role, on ligand binding, forms a receptor complex consisting of two type II and two type I transmembrane serine/threonine kinases. Type II receptors phosphorylate and activate type I receptors which autophosphorylate, then bind and activate SMAD transcriptional regulators. Receptor for activin A, activin B and inhibin A. Mediates induction of adipogenesis by GDF6. In Rattus norvegicus (Rat), this protein is Activin receptor type-2A.